The following is a 96-amino-acid chain: uncharacterized protein (96 aa).

A helical transmembrane segment spans residues 1 to 21 (MSDFEIIVGISSLLQVIILNI).

Its subcellular location is the membrane. This is an uncharacterized protein from Saccharomyces cerevisiae (strain ATCC 204508 / S288c) (Baker's yeast).